The primary structure comprises 100 residues: Replication restart protein PriB (100 aa).

In terms of domain architecture, SSB spans 1–99; it reads MGFNNLVSLA…LRIQNIKEYK (99 aa).

The protein belongs to the PriB family. Homodimer. Interacts with PriA and DnaT. Component of the replication restart primosome. Primosome assembly occurs via a 'hand-off' mechanism. PriA binds to replication forks, subsequently PriB then DnaT bind; DnaT then displaces ssDNA to generate the helicase loading substrate.

Functionally, involved in the restart of stalled replication forks, which reloads the replicative helicase on sites other than the origin of replication; the PriA-PriB pathway is the major replication restart pathway. During primosome assembly it facilitates complex formation between PriA and DnaT on DNA; stabilizes PriA on DNA. Stimulates the DNA unwinding activity of PriA helicase. In Neisseria meningitidis serogroup C (strain 053442), this protein is Replication restart protein PriB.